Consider the following 184-residue polypeptide: Signal peptidase complex subunit 3 (184 aa).

At 1–14 (MFSFVQRFQNVSNQ) the chain is on the cytoplasmic side. Residues 15–35 (AFSMGIVMVVFIMASSYYQLI) form a helical; Signal-anchor for type II membrane protein membrane-spanning segment. Over 36–184 (NNNAFSVPSN…TLTVENKNKV (149 aa)) the chain is Lumenal. N-linked (GlcNAc...) asparagine glycosylation is found at Asn102 and Asn173.

It belongs to the SPCS3 family. In terms of assembly, component of the signal peptidase complex (SPC) composed of a catalytic subunit SEC11 and three accessory subunits SPC1, SPC2 and SPC3. The complex induces a local thinning of the ER membrane which is used to measure the length of the signal peptide (SP) h-region of protein substrates. This ensures the selectivity of the complex towards h-regions shorter than 18-20 amino acids. Interacts with SEC11. SPC associates with the translocon complex.

It is found in the endoplasmic reticulum membrane. Essential component of the signal peptidase complex (SPC) which catalyzes the cleavage of N-terminal signal sequences from nascent proteins as they are translocated into the lumen of the endoplasmic reticulum. Essential for the SPC catalytic activity, possibly by stabilizing and positioning the active center of the complex close to the lumenal surface. Essential for viability. This is Signal peptidase complex subunit 3 (SPC3) from Saccharomyces cerevisiae (strain ATCC 204508 / S288c) (Baker's yeast).